Reading from the N-terminus, the 423-residue chain is Serine--tRNA ligase (423 aa).

The tract at residues 107 to 130 is disordered; it reads PHDSVPDGKSENDNREIRQWGAPP. Basic and acidic residues predominate over residues 110-124; it reads SVPDGKSENDNREIR. 231–233 lines the L-serine pocket; it reads TGE. 262 to 264 lines the ATP pocket; that stretch reads RSE. Glu-285 is a binding site for L-serine. An ATP-binding site is contributed by 349–352; it reads EISS. Ser-385 contacts L-serine.

This sequence belongs to the class-II aminoacyl-tRNA synthetase family. Type-1 seryl-tRNA synthetase subfamily. As to quaternary structure, homodimer. The tRNA molecule binds across the dimer.

It is found in the cytoplasm. The enzyme catalyses tRNA(Ser) + L-serine + ATP = L-seryl-tRNA(Ser) + AMP + diphosphate + H(+). The catalysed reaction is tRNA(Sec) + L-serine + ATP = L-seryl-tRNA(Sec) + AMP + diphosphate + H(+). Its pathway is aminoacyl-tRNA biosynthesis; selenocysteinyl-tRNA(Sec) biosynthesis; L-seryl-tRNA(Sec) from L-serine and tRNA(Sec): step 1/1. Its function is as follows. Catalyzes the attachment of serine to tRNA(Ser). Is also able to aminoacylate tRNA(Sec) with serine, to form the misacylated tRNA L-seryl-tRNA(Sec), which will be further converted into selenocysteinyl-tRNA(Sec). This Coxiella burnetii (strain Dugway 5J108-111) protein is Serine--tRNA ligase.